A 369-amino-acid chain; its full sequence is Histidinol-phosphate aminotransferase (369 aa).

Lysine 222 carries the N6-(pyridoxal phosphate)lysine modification.

The protein belongs to the class-II pyridoxal-phosphate-dependent aminotransferase family. Histidinol-phosphate aminotransferase subfamily. In terms of assembly, homodimer. Pyridoxal 5'-phosphate serves as cofactor.

The catalysed reaction is L-histidinol phosphate + 2-oxoglutarate = 3-(imidazol-4-yl)-2-oxopropyl phosphate + L-glutamate. It participates in amino-acid biosynthesis; L-histidine biosynthesis; L-histidine from 5-phospho-alpha-D-ribose 1-diphosphate: step 7/9. This is Histidinol-phosphate aminotransferase from Halalkalibacterium halodurans (strain ATCC BAA-125 / DSM 18197 / FERM 7344 / JCM 9153 / C-125) (Bacillus halodurans).